Consider the following 728-residue polypeptide: Microtubule-associated protein VP5 (728 aa).

Belongs to the reoviridae microtubule-associated protein family.

It localises to the virion. Its subcellular location is the host cytoplasm. The protein localises to the host cytoskeleton. Minor inner capsid component. Displays NTPase and RNA 5'-triphosphatase (RTPase) activities. May function as a cofactor of polymerase. Associates with microtubules and plays a role in the formation, structural organization and morphology of viral inclusions, where the assembly of cores and the replication of viral RNA occur. The sequence is that of Microtubule-associated protein VP5 (S5) from Aquareovirus C (isolate Golden shiner/USA/GSRV/1977) (AQRV-C).